The following is a 184-amino-acid chain: ATP synthase subunit b, chloroplastic (184 aa).

A helical transmembrane segment spans residues 31 to 49 (IINPSVVLSVLIYFGKGVL).

Belongs to the ATPase B chain family. F-type ATPases have 2 components, F(1) - the catalytic core - and F(0) - the membrane proton channel. F(1) has five subunits: alpha(3), beta(3), gamma(1), delta(1), epsilon(1). F(0) has four main subunits: a(1), b(1), b'(1) and c(10-14). The alpha and beta chains form an alternating ring which encloses part of the gamma chain. F(1) is attached to F(0) by a central stalk formed by the gamma and epsilon chains, while a peripheral stalk is formed by the delta, b and b' chains.

The protein resides in the plastid. Its subcellular location is the chloroplast thylakoid membrane. Functionally, f(1)F(0) ATP synthase produces ATP from ADP in the presence of a proton or sodium gradient. F-type ATPases consist of two structural domains, F(1) containing the extramembraneous catalytic core and F(0) containing the membrane proton channel, linked together by a central stalk and a peripheral stalk. During catalysis, ATP synthesis in the catalytic domain of F(1) is coupled via a rotary mechanism of the central stalk subunits to proton translocation. In terms of biological role, component of the F(0) channel, it forms part of the peripheral stalk, linking F(1) to F(0). This is ATP synthase subunit b, chloroplastic from Pinus koraiensis (Korean pine).